The chain runs to 581 residues: Neither inactivation nor afterpotential protein G (581 aa).

The N-terminal stretch at 1-26 (MGMKFQKILVLAGIVIGFLSIIVVLA) is a signal peptide. 48-77 (DYVIVGGGTGGSTLTSLLAKNSNGSVLLIE) contributes to the FAD binding site. N-linked (GlcNAc...) asparagine glycans are attached at residues Asn70, Asn156, Asn404, and Asn464. His516 functions as the Proton acceptor in the catalytic mechanism.

Belongs to the GMC oxidoreductase family. It depends on FAD as a cofactor.

It localises to the secreted. Its function is as follows. Oxidoreductase involved in biosynthesis of 3-hydroxyretinal, a chromophore for rhodopsin Rh1. Not responsible for the initial hydroxylation of the retinal ring but rather acts in a subsequent step in chromophore production. May catalyze the conversion of (3R)-3-hydroxyretinol to the 3S enantiomer. The sequence is that of Neither inactivation nor afterpotential protein G (ninaG) from Drosophila melanogaster (Fruit fly).